Reading from the N-terminus, the 465-residue chain is MSEAVPTSARKSKNAPVAPGPAPVLEIESLDMEARGVGRTMTEDGEPGKVIFVEGALPGERVTYSSYRRKPSYEQATVVDILRPSVMRTQPKCTFFGTCGGCSMQHLDMRAQVAVKQRVLEDNLWHLAKLRAETMFAPIHGPSWGYRYRARLTVRNVAKKGGVLVGFHEKKSSYVADMTSCEVLPPHVSAMLVPLRRLVEGLSIRDRMPQIELAVGSTVTALVLRVLEPINADDEALLRAFADEHKVQFWLQPKGPDTVTPFYPLDVSLDYTLPEFGIRMPFKPTDFTQVNHQINRVLVGRALRLLAPSRDDRVLDLFCGIGNFTLPLARLSREVMGIEGSDTLTTRALANARENGVDGHTTFACRNLFEVTGDDLRALGAFDKFLIDPPREGALAVSKALAEIAQSGAGPLPKRIVYVSCNPSTLARDAGLLVHEAGYRLKGAGVVNMFPNTSHVESIALFERD.

Residues 1-22 are disordered; sequence MSEAVPTSARKSKNAPVAPGPA. One can recognise a TRAM domain in the interval 16–80; sequence PVAPGPAPVL…PSYEQATVVD (65 aa). [4Fe-4S] cluster is bound by residues C93, C99, C102, and C181. 6 residues coordinate S-adenosyl-L-methionine: Q289, F318, N323, E339, N367, and D388. C421 acts as the Nucleophile in catalysis.

The protein belongs to the class I-like SAM-binding methyltransferase superfamily. RNA M5U methyltransferase family. RlmD subfamily.

The enzyme catalyses uridine(1939) in 23S rRNA + S-adenosyl-L-methionine = 5-methyluridine(1939) in 23S rRNA + S-adenosyl-L-homocysteine + H(+). Its function is as follows. Catalyzes the formation of 5-methyl-uridine at position 1939 (m5U1939) in 23S rRNA. In Burkholderia cenocepacia (strain HI2424), this protein is 23S rRNA (uracil(1939)-C(5))-methyltransferase RlmD.